Reading from the N-terminus, the 255-residue chain is Leucyl/phenylalanyl-tRNA--protein transferase (255 aa).

This sequence belongs to the L/F-transferase family.

Its subcellular location is the cytoplasm. It carries out the reaction N-terminal L-lysyl-[protein] + L-leucyl-tRNA(Leu) = N-terminal L-leucyl-L-lysyl-[protein] + tRNA(Leu) + H(+). The catalysed reaction is N-terminal L-arginyl-[protein] + L-leucyl-tRNA(Leu) = N-terminal L-leucyl-L-arginyl-[protein] + tRNA(Leu) + H(+). The enzyme catalyses L-phenylalanyl-tRNA(Phe) + an N-terminal L-alpha-aminoacyl-[protein] = an N-terminal L-phenylalanyl-L-alpha-aminoacyl-[protein] + tRNA(Phe). Its function is as follows. Functions in the N-end rule pathway of protein degradation where it conjugates Leu, Phe and, less efficiently, Met from aminoacyl-tRNAs to the N-termini of proteins containing an N-terminal arginine or lysine. The sequence is that of Leucyl/phenylalanyl-tRNA--protein transferase from Burkholderia pseudomallei (strain 668).